We begin with the raw amino-acid sequence, 2701 residues long: MAEEGAVAVCVRVRPLNSREESLGETAQVYWKTDNNVIYQVDGSKSFNFDRVFHGNETTKNVYEEIAAPIIDSAIQGYNGTIFAYGQTASGKTYTMMGSEDHLGVIPRAIHDIFQKIKKFPDREFLLRVSYMEIYNETITDLLCGTQKMKPLIIREDVNRNVYVADLTEEVVYTSEMALKWITKGEKSRHYGETKMNQRSSRSHTIFRMILESREKGEPSNCEGSVKVSHLNLVDLAGSERAAQTGAAGVRLKEGCNINRSLFILGQVIKKLSDGQVGGFINYRDSKLTRILQNSLGGNAKTRIICTITPVSFDETLTALQFASTAKYMKNTPYVNEVSTDEALLKRYRKEIMDLKKQLEEVSLETRAQAMEKDQLAQLLEEKDLLQKVQNEKIENLTRMLVTSSSLTLQQELKAKRKRRVTWCLGKINKMKNSNYADQFNIPTNITTKTHKLSINLLREIDESVCSESDVFSNTLDTLSEIEWNPATKLLNQENIESELNSLRADYDNLVLDYEQLRTEKEEMELKLKEKNDLDEFEALERKTKKDQEMQLIHEISNLKNLVKHAEVYNQDLENELSSKVELLREKEDQIKKLQEYIDSQKLENIKMDLSYSLESIEDPKQMKQTLFDAETVALDAKRESAFLRSENLELKEKMKELATTYKQMENDIQLYQSQLEAKKKMQVDLEKELQSAFNEITKLTSLIDGKVPKDLLCNLELEGKITDLQKELNKEVEENEALREEVILLSELKSLPSEVERLRKEIQDKSEELHIITSEKDKLFSEVVHKESRVQGLLEEIGKTKDDLATTQSNYKSTDQEFQNFKTLHMDFEQKYKMVLEENERMNQEIVNLSKEAQKFDSSLGALKTELSYKTQELQEKTREVQERLNEMEQLKEQLENRDSTLQTVEREKTLITEKLQQTLEEVKTLTQEKDDLKQLQESLQIERDQLKSDIHDTVNMNIDTQEQLRNALESLKQHQETINTLKSKISEEVSRNLHMEENTGETKDEFQQKMVGIDKKQDLEAKNTQTLTADVKDNEIIEQQRKIFSLIQEKNELQQMLESVIAEKEQLKTDLKENIEMTIENQEELRLLGDELKKQQEIVAQEKNHAIKKEGELSRTCDRLAEVEEKLKEKSQQLQEKQQQLLNVQEEMSEMQKKINEIENLKNELKNKELTLEHMETERLELAQKLNENYEEVKSITKERKVLKELQKSFETERDHLRGYIREIEATGLQTKEELKIAHIHLKEHQETIDELRRSVSEKTAQIINTQDLEKSHTKLQEEIPVLHEEQELLPNVKEVSETQETMNELELLTEQSTTKDSTTLARIEMERLRLNEKFQESQEEIKSLTKERDNLKTIKEALEVKHDQLKEHIRETLAKIQESQSKQEQSLNMKEKDNETTKIVSEMEQFKPKDSALLRIEIEMLGLSKRLQESHDEMKSVAKEKDDLQRLQEVLQSESDQLKENIKEIVAKHLETEEELKVAHCCLKEQEETINELRVNLSEKETEISTIQKQLEAINDKLQNKIQEIYEKEEQFNIKQISEVQEKVNELKQFKEHRKAKDSALQSIESKMLELTNRLQESQEEIQIMIKEKEEMKRVQEALQIERDQLKENTKEIVAKMKESQEKEYQFLKMTAVNETQEKMCEIEHLKEQFETQKLNLENIETENIRLTQILHENLEEMRSVTKERDDLRSVEETLKVERDQLKENLRETITRDLEKQEELKIVHMHLKEHQETIDKLRGIVSEKTNEISNMQKDLEHSNDALKAQDLKIQEELRIAHMHLKEQQETIDKLRGIVSEKTDKLSNMQKDLENSNAKLQEKIQELKANEHQLITLKKDVNETQKKVSEMEQLKKQIKDQSLTLSKLEIENLNLAQKLHENLEEMKSVMKERDNLRRVEETLKLERDQLKESLQETKARDLEIQQELKTARMLSKEHKETVDKLREKISEKTIQISDIQKDLDKSKDELQKKIQELQKKELQLLRVKEDVNMSHKKINEMEQLKKQFEAQNLSMQSVRMDNFQLTKKLHESLEEIRIVAKERDELRRIKESLKMERDQFIATLREMIARDRQNHQVKPEKRLLSDGQQHLTESLREKCSRIKELLKRYSEMDDHYECLNRLSLDLEKEIEFQKELSMRVKANLSLPYLQTKHIEKLFTANQRCSMEFHRIMKKLKYVLSYVTKIKEEQHESINKFEMDFIDEVEKQKELLIKIQHLQQDCDVPSRELRDLKLNQNMDLHIEEILKDFSESEFPSIKTEFQQVLSNRKEMTQFLEEWLNTRFDIEKLKNGIQKENDRICQVNNFFNNRIIAIMNESTEFEERSATISKEWEQDLKSLKEKNEKLFKNYQTLKTSLASGAQVNPTTQDNKNPHVTSRATQLTTEKIRELENSLHEAKESAMHKESKIIKMQKELEVTNDIIAKLQAKVHESNKCLEKTKETIQVLQDKVALGAKPYKEEIEDLKMKLVKIDLEKMKNAKEFEKEISATKATVEYQKEVIRLLRENLRRSQQAQDTSVISEHTDPQPSNKPLTCGGGSGIVQNTKALILKSEHIRLEKEISKLKQQNEQLIKQKNELLSNNQHLSNEVKTWKERTLKREAHKQVTCENSPKSPKVTGTASKKKQITPSQCKERNLQDPVPKESPKSCFFDSRSKSLPSPHPVRYFDNSSLGLCPEVQNAGAESVDSQPGPWHASSGKDVPECKTQ.

Residues Ala6–Met329 form the Kinesin motor domain. Gly86–Thr93 contacts ATP. Residues Asn336–Arg2590 are a coiled coil. Residues Ser611 and Ser2083 each carry the phosphoserine modification. Residues Lys2126–Lys2476 form a kinetochore-binding domain region. The interval Ser2355–Thr2376 is disordered. Ser2389 is subject to Phosphoserine. A compositionally biased stretch (polar residues) spans Gln2508 to Pro2527. Disordered regions lie at residues Gln2508 to Gly2533 and Lys2588 to Gln2701. Residues Gln2510–Cys2698 are globular autoinhibitory domain. A compositionally biased stretch (basic and acidic residues) spans Lys2588–Val2600. Over residues Thr2601–Gln2625 the composition is skewed to polar residues. The span at Cys2626–Pro2640 shows a compositional bias: basic and acidic residues. Phosphoserine occurs at positions 2639, 2647, and 2651. Cys2698 is modified (cysteine methyl ester). Residue Cys2698 is the site of S-farnesyl cysteine attachment. A propeptide spans Lys2699–Gln2701 (removed in mature form).

This sequence belongs to the TRAFAC class myosin-kinesin ATPase superfamily. Kinesin family. As to quaternary structure, monomer. Interacts with CENPF. Interacts with BUB1B. Interacts with SEPT7. Interacts with KIF18A. Interacts with PRC1. Interacts with NUF2; this interaction determines kinetochore localization. Interacts with SKAP; this interaction greatly favors SKAP binding to microtubules. Interacts with TRAPPC12. Interacts with CTCF. Post-translationally, the C-terminal inhibitory domain is phosphorylated. Phosphorylation relieves autoinhibition of the kinetochore motor. Sumoylated with SUMO2 and SUMO3. The sumoylation mediates the association to the kinetochore.

It localises to the chromosome. Its subcellular location is the centromere. It is found in the kinetochore. The protein resides in the cytoplasm. The protein localises to the cytoskeleton. It localises to the spindle. In terms of biological role, microtubule plus-end-directed kinetochore motor which plays an important role in chromosome congression, microtubule-kinetochore conjugation and spindle assembly checkpoint activation. Drives chromosome congression (alignment of chromosomes at the spindle equator resulting in the formation of the metaphase plate) by mediating the lateral sliding of polar chromosomes along spindle microtubules towards the spindle equator and by aiding the establishment and maintenance of connections between kinetochores and spindle microtubules. The transport of pole-proximal chromosomes towards the spindle equator is favored by microtubule tracks that are detyrosinated. Acts as a processive bi-directional tracker of dynamic microtubule tips; after chromosomes have congressed, continues to play an active role at kinetochores, enhancing their links with dynamic microtubule ends. Suppresses chromosome congression in NDC80-depleted cells and contributes positively to congression only when microtubules are stabilized. Plays an important role in the formation of stable attachments between kinetochores and spindle microtubules The stabilization of kinetochore-microtubule attachment also requires CENPE-dependent localization of other proteins to the kinetochore including BUB1B, MAD1 and MAD2. Plays a role in spindle assembly checkpoint activation (SAC) via its interaction with BUB1B resulting in the activation of its kinase activity, which is important for activating SAC. Necessary for the mitotic checkpoint signal at individual kinetochores to prevent aneuploidy due to single chromosome loss. This Homo sapiens (Human) protein is Centromere-associated protein E (CENPE).